The sequence spans 81 residues: Photosystem I iron-sulfur center (81 aa).

4Fe-4S ferredoxin-type domains lie at serine 2–tryptophan 31 and isoleucine 39–tyrosine 68. [4Fe-4S] cluster-binding residues include cysteine 11, cysteine 14, cysteine 17, cysteine 21, cysteine 48, cysteine 51, cysteine 54, and cysteine 58.

As to quaternary structure, the eukaryotic PSI reaction center is composed of at least 11 subunits. The cofactor is [4Fe-4S] cluster.

The protein localises to the plastid. The protein resides in the chloroplast thylakoid membrane. It catalyses the reaction reduced [plastocyanin] + hnu + oxidized [2Fe-2S]-[ferredoxin] = oxidized [plastocyanin] + reduced [2Fe-2S]-[ferredoxin]. In terms of biological role, apoprotein for the two 4Fe-4S centers FA and FB of photosystem I (PSI); essential for photochemical activity. FB is the terminal electron acceptor of PSI, donating electrons to ferredoxin. The C-terminus interacts with PsaA/B/D and helps assemble the protein into the PSI complex. Required for binding of PsaD and PsaE to PSI. PSI is a plastocyanin-ferredoxin oxidoreductase, converting photonic excitation into a charge separation, which transfers an electron from the donor P700 chlorophyll pair to the spectroscopically characterized acceptors A0, A1, FX, FA and FB in turn. The protein is Photosystem I iron-sulfur center of Vitis vinifera (Grape).